The chain runs to 138 residues: MRALWIVAVLLVGVEGSLFELGKMIWQETGKNPVKNYGLYGCNCGVGGRGEPLDATDRCCFVHKCCYKKLTDCDSKKDRYSYKWKNKAIVCGKNQPCMQEMCECDKAFAICLRENLDTYNKSFRYHLKPSCKKTSEQC.

The first 16 residues, 1 to 16 (MRALWIVAVLLVGVEG), serve as a signal peptide directing secretion. 7 disulfides stabilise this stretch: C42-C131, C44-C60, C59-C111, C65-C138, C66-C104, C73-C97, and C91-C102. Residues 121–133 (KSFRYHLKPSCKK) form an important for membrane-damaging activities in eukaryotes and bacteria; heparin-binding region.

Monomer. Expressed by the venom gland.

The protein resides in the secreted. Its function is as follows. Snake venom phospholipase A2 homolog that lacks enzymatic activity. Is myotoxic. Has a strong indirect hemolytic activity and anticoagulant activity. A model of myotoxic mechanism has been proposed: an apo Lys49-PLA2 is activated by the entrance of a hydrophobic molecule (e.g. fatty acid) at the hydrophobic channel of the protein leading to a reorientation of a monomer. This reorientation causes a transition between 'inactive' to 'active' states, causing alignment of C-terminal and membrane-docking sites (MDoS) side-by-side and putting the membrane-disruption sites (MDiS) in the same plane, exposed to solvent and in a symmetric position for both monomers. The MDoS region stabilizes the toxin on membrane by the interaction of charged residues with phospholipid head groups. Subsequently, the MDiS region destabilizes the membrane with penetration of hydrophobic residues. This insertion causes a disorganization of the membrane, allowing an uncontrolled influx of ions (i.e. calcium and sodium), and eventually triggering irreversible intracellular alterations and cell death. The sequence is that of Basic phospholipase A2 homolog acutohaemolysin from Deinagkistrodon acutus (Hundred-pace snake).